Reading from the N-terminus, the 463-residue chain is 4-hydroxybenzoate polyprenyltransferase, mitochondrial (463 aa).

Disordered regions lie at residues 28 to 48 (NNNT…STFN) and 133 to 152 (LLDD…NNKP). Over residues 137–150 (NNSNSNNNNNSNNN) the composition is skewed to low complexity. Helical transmembrane passes span 181 to 201 (IGVW…APAG), 206 to 226 (LKTM…GCVI), 257 to 277 (LIFL…SLNY), 305 to 325 (FVLG…IAGS), 330 to 350 (IVAP…TIYA), 375 to 395 (IILS…GIAA), and 431 to 451 (FISN…SKLL).

It belongs to the UbiA prenyltransferase family. Mg(2+) serves as cofactor.

The protein localises to the mitochondrion inner membrane. The catalysed reaction is an all-trans-polyprenyl diphosphate + 4-hydroxybenzoate = a 4-hydroxy-3-(all-trans-polyprenyl)benzoate + diphosphate. The protein operates within cofactor biosynthesis; ubiquinone biosynthesis. Catalyzes the prenylation of para-hydroxybenzoate (PHB) with an all-trans polyprenyl group. Mediates the second step in the final reaction sequence of coenzyme Q (CoQ) biosynthesis, which is the condensation of the polyisoprenoid side chain with PHB. Its function is as follows. Catalyzes the prenylation of para-hydroxybenzoate (PHB) with an all-trans polyprenyl group. Mediates the second step in the final reaction sequence of coenzyme Q (CoQ) biosynthesis, which is the condensation of the polyisoprenoid side chain with PHB, generating the first membrane-bound Q intermediate. The protein is 4-hydroxybenzoate polyprenyltransferase, mitochondrial of Dictyostelium discoideum (Social amoeba).